A 220-amino-acid chain; its full sequence is Ribonuclease P protein component 3 (220 aa).

It belongs to the eukaryotic/archaeal RNase P protein component 3 family. As to quaternary structure, consists of a catalytic RNA component and at least 4-5 protein subunits.

The protein localises to the cytoplasm. It carries out the reaction Endonucleolytic cleavage of RNA, removing 5'-extranucleotides from tRNA precursor.. In terms of biological role, part of ribonuclease P, a protein complex that generates mature tRNA molecules by cleaving their 5'-ends. The chain is Ribonuclease P protein component 3 from Thermococcus kodakarensis (strain ATCC BAA-918 / JCM 12380 / KOD1) (Pyrococcus kodakaraensis (strain KOD1)).